Reading from the N-terminus, the 150-residue chain is Large ribosomal subunit protein bL9 (150 aa).

This sequence belongs to the bacterial ribosomal protein bL9 family.

In terms of biological role, binds to the 23S rRNA. In Shewanella sediminis (strain HAW-EB3), this protein is Large ribosomal subunit protein bL9.